The chain runs to 413 residues: Enolase (413 aa).

Residue Gln170 coordinates (2R)-2-phosphoglycerate. Glu212 serves as the catalytic Proton donor. Positions 245, 286, and 313 each coordinate Mg(2+). Positions 338, 367, 368, and 389 each coordinate (2R)-2-phosphoglycerate. Lys338 serves as the catalytic Proton acceptor.

The protein belongs to the enolase family. Requires Mg(2+) as cofactor.

It localises to the cytoplasm. The protein localises to the secreted. It is found in the cell surface. The enzyme catalyses (2R)-2-phosphoglycerate = phosphoenolpyruvate + H2O. Its pathway is carbohydrate degradation; glycolysis; pyruvate from D-glyceraldehyde 3-phosphate: step 4/5. Functionally, catalyzes the reversible conversion of 2-phosphoglycerate (2-PG) into phosphoenolpyruvate (PEP). It is essential for the degradation of carbohydrates via glycolysis. In Neorickettsia sennetsu (strain ATCC VR-367 / Miyayama) (Ehrlichia sennetsu), this protein is Enolase.